A 414-amino-acid polypeptide reads, in one-letter code: MSEAQETHVEQLPESVVDAPVEEQHQEPPQAPDAPQEPQVPQESAPQESAPQEPPAPQEQNDVPPPSNAPIYEGEESHSVQDYQEAHQHHQPPEPQPYYPPPPPGEHMHGRPPMHHRQEGELSNTRLFVRPFPLDVQESELNEIFGPFGPMKEVKILNGFAFVEFEEAESAAKAIEEVHGKSFANQPLEVVYSKLPAKRYRITMKNLPEGCSWQDLKDLARENSLETTFSSVNTRDFDGTGALEFPSEEILVEALERLNNIEFRGSVITVERDDNPPPIRRSNRGGFRGRGGFRGGFRGGFRGGFSRGGFGGPRGGFGGPRGGYGGYSRGGYGGYSRGGYGGSRGGYDSPRGGYDSPRGGYSRGGYGGPRNDYGPPRGSYGGSRGGYDGPRGDYGPPRDAYRTRDAPRERSPTR.

The segment covering 1-11 has biased composition (basic and acidic residues); sequence MSEAQETHVEQ. A disordered region spans residues 1–119; sequence MSEAQETHVE…GRPPMHHRQE (119 aa). Ser15 carries the phosphoserine modification. Over residues 33–51 the composition is skewed to low complexity; the sequence is DAPQEPQVPQESAPQESAP. The span at 52-68 shows a compositional bias: pro residues; it reads QEPPAPQEQNDVPPPSN. Residues 75 to 92 are compositionally biased toward basic and acidic residues; sequence EESHSVQDYQEAHQHHQP. Ser79 is modified (phosphoserine). Positions 93–105 are enriched in pro residues; that stretch reads PEPQPYYPPPPPG. RRM domains follow at residues 125–195 and 200–275; these read TRLF…YSKL and YRIT…RDDN. A phosphoserine mark is found at Ser182, Ser212, and Ser224. The tract at residues 269–299 is disordered; that stretch reads TVERDDNPPPIRRSNRGGFRGRGGFRGGFRG. Residues 286–299 are compositionally biased toward gly residues; it reads GFRGRGGFRGGFRG. Arg288, Arg290, Arg294, and Arg298 each carry dimethylated arginine. Arg302 bears the Omega-N-methylarginine mark. Dimethylated arginine; alternate occurs at positions 307 and 314. 2 positions are modified to omega-N-methylarginine; alternate: Arg307 and Arg314. Residues Arg321, Arg329, Arg337, and Arg344 each carry the omega-N-methylarginine modification. The interval 343-414 is disordered; sequence SRGGYDSPRG…DAPRERSPTR (72 aa). A compositionally biased stretch (low complexity) spans 346-360; that stretch reads GYDSPRGGYDSPRGG. Arg351 bears the Dimethylated arginine; alternate mark. Arg351 is modified (omega-N-methylarginine; alternate). Phosphoserine is present on Ser356. Residues Arg358, Arg363, Arg377, and Arg384 each carry the dimethylated arginine; alternate modification. An omega-N-methylarginine; alternate mark is found at Arg358, Arg363, Arg377, and Arg384. Residues 379 to 389 show a composition bias toward gly residues; the sequence is SYGGSRGGYDG. Arg391 carries the post-translational modification Omega-N-methylarginine. The segment covering 399–414 has biased composition (basic and acidic residues); that stretch reads DAYRTRDAPRERSPTR.

It belongs to the RRM GAR family. In terms of assembly, interacts with RRP6. Methylated by HMT1. The methylation is required for nuclear export.

It is found in the cytoplasm. The protein localises to the nucleus. Its subcellular location is the stress granule. Involved in mRNA processing and export. Required for efficient splicing of a large set of pre-mRNAs by efficient co-transcriptional recruitment of the splicing machinery. Remains associated with the mRNP during early steps of translation elongation. The protein is Serine/arginine (SR)-type shuttling mRNA binding protein NPL3 of Saccharomyces cerevisiae (strain ATCC 204508 / S288c) (Baker's yeast).